A 250-amino-acid polypeptide reads, in one-letter code: Cobalt transport protein CbiM (250 aa).

A signal peptide spans 1 to 27 (MKKPLFFIASACVTIYILFALSPSVYA). 6 helical membrane-spanning segments follow: residues 33–53 (GFLP…FFLV), 70–90 (LLLA…IPSV), 102–122 (LGAL…VLLF), 134–154 (TLGA…YVLF), 168–188 (VFLA…IQLA), and 208–228 (IFAV…VVVW).

Belongs to the CbiM family. Forms an energy-coupling factor (ECF) transporter complex composed of an ATP-binding protein (A component, CbiO), a transmembrane protein (T component, CbiQ) and 2 possible substrate-capture proteins (S components, CbiM and CbiN) of unknown stoichimetry.

Its subcellular location is the cell membrane. The protein operates within cofactor biosynthesis; adenosylcobalamin biosynthesis. In terms of biological role, part of the energy-coupling factor (ECF) transporter complex CbiMNOQ involved in cobalt import. The polypeptide is Cobalt transport protein CbiM (Anoxybacillus flavithermus (strain DSM 21510 / WK1)).